The sequence spans 129 residues: Protein LLP homolog (129 aa).

Basic residues predominate over residues 1–21 (MAKSLRSKWKRKMRAEKRKKN). Positions 1–27 (MAKSLRSKWKRKMRAEKRKKNAPKEAS) are disordered. Glycyl lysine isopeptide (Lys-Gly) (interchain with G-Cter in SUMO2) cross-links involve residues Lys67 and Lys74. Residues 100–122 (RQRKRLKAKREKRKGKSKAKAVK) show a composition bias toward basic residues. The tract at residues 100–129 (RQRKRLKAKREKRKGKSKAKAVKVAKGLAW) is disordered.

It belongs to the learning-associated protein family. In terms of assembly, interacts with CTCF, MYO1C and with the transcriptional machinery, including RNA polymerase II and TBP.

It localises to the nucleus. Its subcellular location is the nucleolus. The protein localises to the chromosome. In terms of biological role, in hippocampal neurons, regulates dendritic and spine growth and synaptic transmission. The chain is Protein LLP homolog (LLPH) from Homo sapiens (Human).